The primary structure comprises 509 residues: Steroid 17-alpha-hydroxylase/17,20 lyase (509 aa).

N202 contributes to the substrate binding site. Residue C442 coordinates heme.

It belongs to the cytochrome P450 family. Requires heme as cofactor.

The protein resides in the endoplasmic reticulum membrane. It is found in the microsome membrane. It catalyses the reaction a C21-steroid + reduced [NADPH--hemoprotein reductase] + O2 = a 17alpha-hydroxy-C21-steroid + oxidized [NADPH--hemoprotein reductase] + H2O + H(+). The catalysed reaction is progesterone + reduced [NADPH--hemoprotein reductase] + O2 = 17alpha-hydroxyprogesterone + oxidized [NADPH--hemoprotein reductase] + H2O + H(+). It carries out the reaction pregnenolone + reduced [NADPH--hemoprotein reductase] + O2 = 17alpha-hydroxypregnenolone + oxidized [NADPH--hemoprotein reductase] + H2O + H(+). The enzyme catalyses 17alpha-hydroxyprogesterone + reduced [NADPH--hemoprotein reductase] + O2 = androst-4-ene-3,17-dione + acetate + oxidized [NADPH--hemoprotein reductase] + H2O + 2 H(+). It catalyses the reaction 17alpha-hydroxyprogesterone + reduced [NADPH--hemoprotein reductase] + O2 = 16alpha,17alpha-dihydroxyprogesterone + oxidized [NADPH--hemoprotein reductase] + H2O + H(+). The catalysed reaction is 16alpha,17alpha-dihydroxyprogesterone + reduced [NADPH--hemoprotein reductase] + O2 = 6beta,16alpha,17alpha-trihydroxyprogesterone + oxidized [NADPH--hemoprotein reductase] + H2O + H(+). It carries out the reaction 17alpha-hydroxypregnenolone + reduced [NADPH--hemoprotein reductase] + O2 = 3beta-hydroxyandrost-5-en-17-one + acetate + oxidized [NADPH--hemoprotein reductase] + H2O + 2 H(+). The enzyme catalyses 16alpha,17alpha-dihydroxypregnenolone + reduced [NADPH--hemoprotein reductase] + O2 = 3beta,16alpha-dihydroxy-androst-5-en-17-one + acetate + oxidized [NADPH--hemoprotein reductase] + H2O + 2 H(+). It catalyses the reaction 3beta-hydroxyandrost-5-en-17-one + reduced [NADPH--hemoprotein reductase] + O2 = 3beta,16alpha-dihydroxy-androst-5-en-17-one + oxidized [NADPH--hemoprotein reductase] + H2O + H(+). The catalysed reaction is androst-4-ene-3,17-dione + reduced [NADPH--hemoprotein reductase] + O2 = 16alpha-hydroxyandrost-4-ene-3,17-dione + oxidized [NADPH--hemoprotein reductase] + H2O + H(+). It participates in steroid hormone biosynthesis. It functions in the pathway steroid biosynthesis; glucocorticoid biosynthesis. Regulated predominantly by intracellular cAMP levels. The 17,20-lyase activity is stimulated by cytochrome b5, which acts as an allosteric effector increasing the Vmax of the lyase activity. Functionally, a cytochrome P450 monooxygenase involved in corticoid and androgen biosynthesis. Catalyzes 17-alpha hydroxylation of C21 steroids, which is common for both pathways. A second oxidative step, required only for androgen synthesis, involves an acyl-carbon cleavage. The 17-alpha hydroxy intermediates, as part of adrenal glucocorticoids biosynthesis pathway, are precursors of cortisol. Hydroxylates steroid hormones, pregnenolone and progesterone to form 17-alpha hydroxy metabolites, followed by the cleavage of the C17-C20 bond to form C19 steroids, dehydroepiandrosterone (DHEA) and androstenedione. Has 16-alpha hydroxylase activity. Catalyzes 16-alpha hydroxylation of 17-alpha hydroxy pregnenolone, followed by the cleavage of the C17-C20 bond to form 16-alpha-hydroxy DHEA. Also 16-alpha hydroxylates androgens, relevant for estriol synthesis. Mechanistically, uses molecular oxygen inserting one oxygen atom into a substrate, and reducing the second into a water molecule, with two electrons provided by NADPH via cytochrome P450 reductase (CPR; NADPH-ferrihemoprotein reductase). The polypeptide is Steroid 17-alpha-hydroxylase/17,20 lyase (CYP17A1) (Sus scrofa (Pig)).